The primary structure comprises 63 residues: Large ribosomal subunit protein bL28 (63 aa).

Belongs to the bacterial ribosomal protein bL28 family.

The chain is Large ribosomal subunit protein bL28 from Dictyoglomus thermophilum (strain ATCC 35947 / DSM 3960 / H-6-12).